Consider the following 104-residue polypeptide: Large ribosomal subunit protein uL24 (104 aa).

This sequence belongs to the universal ribosomal protein uL24 family. Part of the 50S ribosomal subunit.

One of two assembly initiator proteins, it binds directly to the 5'-end of the 23S rRNA, where it nucleates assembly of the 50S subunit. In terms of biological role, one of the proteins that surrounds the polypeptide exit tunnel on the outside of the subunit. This Shewanella loihica (strain ATCC BAA-1088 / PV-4) protein is Large ribosomal subunit protein uL24.